The following is a 257-amino-acid chain: Proteasome assembly chaperone 1 (257 aa).

Belongs to the PSMG1 family. In terms of assembly, forms a heterodimer with psmg2.

In terms of biological role, chaperone protein which promotes assembly of the 20S proteasome as part of a heterodimer with psmg2. This chain is Proteasome assembly chaperone 1 (psmg1), found in Nematostella vectensis (Starlet sea anemone).